The chain runs to 257 residues: Short-chain dehydrogenase reductase 3a (257 aa).

12–36 (IITGGASGIGAEAVRLFTDHGAKVV) serves as a coordination point for NAD(+). Residue Ser-144 coordinates substrate. Tyr-157 serves as the catalytic Proton acceptor.

It belongs to the short-chain dehydrogenases/reductases (SDR) family. Highly expressed in the radicle tip, lateral root primordia and tips, and the area surrounding the cotyledon hydathode of young seedlings.

Confers resistance to the incompatible pathogenic bacteria P.syringae pv. tomato DC3000 in a PR1-dependent manner. Seems not involved in abscisic acid (ABA) biosynthesis. The sequence is that of Short-chain dehydrogenase reductase 3a (SDR3a) from Arabidopsis thaliana (Mouse-ear cress).